Here is a 496-residue protein sequence, read N- to C-terminus: ADP-dependent glucokinase (496 aa).

The N-terminal stretch at 1–22 (MALWRGSACAGFLALAVGCVFL) is a signal peptide. Positions 52-496 (SPESRLAAAW…GLFYSEARPD (445 aa)) constitute an ADPK domain. Residues glutamate 297, glutamate 328, and aspartate 481 each contribute to the Mg(2+) site. Aspartate 481 acts as the Proton acceptor in catalysis.

It belongs to the ADP-dependent glucokinase family. As to quaternary structure, monomer. It depends on Mg(2+) as a cofactor.

The protein localises to the secreted. It catalyses the reaction D-glucose + ADP = D-glucose 6-phosphate + AMP + H(+). The protein operates within carbohydrate degradation; glycolysis. In terms of biological role, catalyzes the phosphorylation of D-glucose to D-glucose 6-phosphate using ADP as the phosphate donor. GDP and CDP can replace ADP, but with reduced efficiency. This is ADP-dependent glucokinase (Adpgk) from Mus musculus (Mouse).